A 2293-amino-acid polypeptide reads, in one-letter code: Protein Ycf2 (2293 aa).

1647-1654 (GSIGTGRS) is an ATP binding site.

This sequence belongs to the Ycf2 family.

The protein localises to the plastid. It is found in the chloroplast stroma. In terms of biological role, probable ATPase of unknown function. Its presence in a non-photosynthetic plant (Epifagus virginiana) and experiments in tobacco indicate that it has an essential function which is probably not related to photosynthesis. The chain is Protein Ycf2 from Lobularia maritima (Sweet alyssum).